Reading from the N-terminus, the 532-residue chain is Phosphoenolpyruvate carboxykinase (ATP) (532 aa).

Residues Arg60, Tyr194, and Lys200 each coordinate substrate. ATP contacts are provided by residues Lys200, His219, and Gly237–Thr245. The Mn(2+) site is built by Lys200 and His219. Asp258 provides a ligand contact to Mn(2+). ATP contacts are provided by Glu286, Arg324, and Thr449. Arg324 is a substrate binding site.

The protein belongs to the phosphoenolpyruvate carboxykinase (ATP) family. The cofactor is Mn(2+).

Its subcellular location is the cytoplasm. It catalyses the reaction oxaloacetate + ATP = phosphoenolpyruvate + ADP + CO2. It functions in the pathway carbohydrate biosynthesis; gluconeogenesis. Involved in the gluconeogenesis. Catalyzes the conversion of oxaloacetate (OAA) to phosphoenolpyruvate (PEP) through direct phosphoryl transfer between the nucleoside triphosphate and OAA. This chain is Phosphoenolpyruvate carboxykinase (ATP), found in Cereibacter sphaeroides (strain ATCC 17025 / ATH 2.4.3) (Rhodobacter sphaeroides).